Consider the following 276-residue polypeptide: Octanoyltransferase LipM (276 aa).

Residues 32-247 form the BPL/LPL catalytic domain; that stretch reads GEVAPTLRFY…GFEDALQLTF (216 aa). The Acyl-thioester intermediate role is filled by C149.

This sequence belongs to the octanoyltransferase LipM family. In terms of assembly, monomer.

It carries out the reaction octanoyl-[ACP] + L-lysyl-[protein] = N(6)-octanoyl-L-lysyl-[protein] + holo-[ACP] + H(+). It participates in protein modification; protein lipoylation via endogenous pathway; protein N(6)-(lipoyl)lysine from octanoyl-[acyl-carrier-protein]. Catalyzes the transfer of endogenously produced octanoic acid from octanoyl-acyl-carrier-protein onto the lipoyl domain of GcvH, an intermediate carrier during protein lipoylation. In Exiguobacterium sibiricum (strain DSM 17290 / CCUG 55495 / CIP 109462 / JCM 13490 / 255-15), this protein is Octanoyltransferase LipM.